The sequence spans 574 residues: Cyclomaltodextrinase (574 aa).

6 residues coordinate Ca(2+): Asn144, Asp146, Asn149, Asp150, Gly168, and Asp170. Positions 243 and 323 each coordinate substrate. Asp325 (nucleophile) is an active-site residue. Glu354 (proton donor) is an active-site residue. Substrate-binding positions include 420 to 421 (HD), Asp465, and Arg469.

This sequence belongs to the glycosyl hydrolase 13 family. As to quaternary structure, monomer. Ca(2+) is required as a cofactor.

It catalyses the reaction cyclomaltodextrin + H2O = linear maltodextrin. In terms of biological role, hydrolyzes cyclodextrins. Can also act on linear maltodextrins, with the exception of maltose. The chain is Cyclomaltodextrinase from Thermoanaerobacter pseudethanolicus (strain ATCC 33223 / 39E) (Clostridium thermohydrosulfuricum).